The primary structure comprises 197 residues: Imidazoleglycerol-phosphate dehydratase (197 aa).

This sequence belongs to the imidazoleglycerol-phosphate dehydratase family.

The protein localises to the cytoplasm. It carries out the reaction D-erythro-1-(imidazol-4-yl)glycerol 3-phosphate = 3-(imidazol-4-yl)-2-oxopropyl phosphate + H2O. It functions in the pathway amino-acid biosynthesis; L-histidine biosynthesis; L-histidine from 5-phospho-alpha-D-ribose 1-diphosphate: step 6/9. This chain is Imidazoleglycerol-phosphate dehydratase, found in Marinomonas sp. (strain MWYL1).